Reading from the N-terminus, the 343-residue chain is ATP-dependent (S)-NAD(P)H-hydrate dehydratase (343 aa).

A mitochondrion-targeting transit peptide spans 1–42; sequence MAVHACGAAAAVVALLSAAIALQWSPLYAVLQRALSLHTAHA. Residues 49–340 enclose the YjeF C-terminal domain; sequence LFQLVRNIVP…TEVGTAFSRL (292 aa). Lys63 is modified (N6-acetyllysine). Phosphotyrosine is present on Tyr81. Residues Gly149 and 202–208 each bind (6S)-NADPHX; that span reads NHVEFSR. Ser216 bears the Phosphoserine mark. Residues 242–246 and 261–270 contribute to the ATP site; these read KGEQD and GSSRRCGGQG. Position 271 (Asp271) interacts with (6S)-NADPHX.

The protein belongs to the NnrD/CARKD family. The cofactor is Mg(2+).

The protein resides in the mitochondrion. It catalyses the reaction (6S)-NADHX + ATP = ADP + phosphate + NADH + H(+). It carries out the reaction (6S)-NADPHX + ATP = ADP + phosphate + NADPH + H(+). Catalyzes the dehydration of the S-form of NAD(P)HX at the expense of ATP, which is converted to ADP. Together with NAD(P)HX epimerase, which catalyzes the epimerization of the S- and R-forms, the enzyme allows the repair of both epimers of NAD(P)HX, a damaged form of NAD(P)H that is a result of enzymatic or heat-dependent hydration. The polypeptide is ATP-dependent (S)-NAD(P)H-hydrate dehydratase (Mus musculus (Mouse)).